The chain runs to 304 residues: HPr kinase/phosphorylase (304 aa).

Active-site residues include His136 and Lys157. Residue 151–158 (GESGIGKS) participates in ATP binding. Mg(2+) is bound at residue Ser158. Asp175 acts as the Proton acceptor; for phosphorylation activity. Proton donor; for dephosphorylation activity in catalysis. Residues 198–207 (LEVRGIGIID) form an important for the catalytic mechanism of both phosphorylation and dephosphorylation region. Residue Glu199 coordinates Mg(2+). Residue Arg240 is part of the active site. Residues 261–266 (PVRPGR) form an important for the catalytic mechanism of dephosphorylation region.

The protein belongs to the HPrK/P family. In terms of assembly, homohexamer. Mg(2+) is required as a cofactor.

The catalysed reaction is [HPr protein]-L-serine + ATP = [HPr protein]-O-phospho-L-serine + ADP + H(+). It carries out the reaction [HPr protein]-O-phospho-L-serine + phosphate + H(+) = [HPr protein]-L-serine + diphosphate. Its function is as follows. Catalyzes the ATP- as well as the pyrophosphate-dependent phosphorylation of a specific serine residue in HPr, a phosphocarrier protein of the phosphoenolpyruvate-dependent sugar phosphotransferase system (PTS). HprK/P also catalyzes the pyrophosphate-producing, inorganic phosphate-dependent dephosphorylation (phosphorolysis) of seryl-phosphorylated HPr (P-Ser-HPr). The two antagonistic activities of HprK/P are regulated by several intracellular metabolites, which change their concentration in response to the absence or presence of rapidly metabolisable carbon sources (glucose, fructose, etc.) in the growth medium. Therefore, by controlling the phosphorylation state of HPr, HPrK/P is a sensor enzyme that plays a major role in the regulation of carbon metabolism and sugar transport: it mediates carbon catabolite repression (CCR), and regulates PTS-catalyzed carbohydrate uptake and inducer exclusion. The polypeptide is HPr kinase/phosphorylase (Clostridium botulinum (strain Alaska E43 / Type E3)).